A 118-amino-acid polypeptide reads, in one-letter code: Cell division protein FtsB (118 aa).

Topologically, residues 1 to 3 are cytoplasmic; that stretch reads MRL. The chain crosses the membrane as a helical span at residues 4 to 21; it reads LFLVLLVLLGLIQYPLWL. The Periplasmic segment spans residues 22-118; sequence GKGGWFKVWD…PRPPATPPRR (97 aa). Residues 28 to 62 are a coiled coil; that stretch reads KVWDLQRQVAEQRETNDGLRARNTALEAEVRDLAT. A disordered region spans residues 88–118; sequence LPPGTPLPSGNSTPQASALSKPRPPATPPRR. The segment covering 95-105 has biased composition (polar residues); the sequence is PSGNSTPQASA. Residues 109–118 are compositionally biased toward pro residues; it reads PRPPATPPRR.

The protein belongs to the FtsB family. In terms of assembly, part of a complex composed of FtsB, FtsL and FtsQ.

The protein resides in the cell inner membrane. Its function is as follows. Essential cell division protein. May link together the upstream cell division proteins, which are predominantly cytoplasmic, with the downstream cell division proteins, which are predominantly periplasmic. This is Cell division protein FtsB from Bordetella parapertussis (strain 12822 / ATCC BAA-587 / NCTC 13253).